We begin with the raw amino-acid sequence, 170 residues long: Adenine phosphoribosyltransferase (170 aa).

Belongs to the purine/pyrimidine phosphoribosyltransferase family. As to quaternary structure, homodimer.

Its subcellular location is the cytoplasm. It carries out the reaction AMP + diphosphate = 5-phospho-alpha-D-ribose 1-diphosphate + adenine. It functions in the pathway purine metabolism; AMP biosynthesis via salvage pathway; AMP from adenine: step 1/1. Its function is as follows. Catalyzes a salvage reaction resulting in the formation of AMP, that is energically less costly than de novo synthesis. The polypeptide is Adenine phosphoribosyltransferase (Cyanothece sp. (strain PCC 7425 / ATCC 29141)).